The following is a 414-amino-acid chain: Putative F-box/kelch-repeat protein At1g20940 (414 aa).

The F-box domain occupies 13 to 65 (SSIINDLPLDLLDEILFRLEPKSMAMMRCTNNSIKSYLSDPRFGPEYPSWVRP). Kelch repeat units lie at residues 281–328 (LTLI…MYDG) and 331–378 (LVVR…KLTP).

Interacts with DEK3.

The protein operates within protein modification; protein ubiquitination. In terms of biological role, probable component of an E3 ubiquitin ligase complex. The protein is Putative F-box/kelch-repeat protein At1g20940 of Arabidopsis thaliana (Mouse-ear cress).